The chain runs to 294 residues: Deubiquitinase OTUD6B (294 aa).

Residues 85–120 (VTSLDLGSEEPVQQPRVSKAQKRREKKAAQEKERDD) are disordered. The span at 111-120 (KAAQEKERDD) shows a compositional bias: basic and acidic residues. The OTU domain occupies 150-287 (LQIRQIPSDG…GEHYNSVEQL (138 aa)). The tract at residues 155–161 (IPSDGHC) is cys-loop. Residue D158 is part of the active site. C161 functions as the Nucleophile in the catalytic mechanism. Positions 222–232 (IVNTPAWGGQL) are variable-loop. Positions 270–280 (YMRHAYGLGEH) are his-loop. Residue H280 is part of the active site.

The enzyme catalyses Thiol-dependent hydrolysis of ester, thioester, amide, peptide and isopeptide bonds formed by the C-terminal Gly of ubiquitin (a 76-residue protein attached to proteins as an intracellular targeting signal).. Deubiquitinating enzyme that may play a role in the ubiquitin-dependent regulation of different cellular processes. In Xenopus laevis (African clawed frog), this protein is Deubiquitinase OTUD6B (otud6b).